We begin with the raw amino-acid sequence, 682 residues long: DNA ligase (682 aa).

NAD(+)-binding positions include 43 to 47 (DSEYD), 92 to 93 (SL), and Asp-123. Lys-125 (N6-AMP-lysine intermediate) is an active-site residue. NAD(+)-binding residues include Arg-146, Glu-184, Lys-302, and Lys-326. Residues Cys-420, Cys-423, Cys-438, and Cys-443 each contribute to the Zn(2+) site. One can recognise a BRCT domain in the interval 603-682 (TTKGFFTGKK…TFLQKLLIVL (80 aa)).

This sequence belongs to the NAD-dependent DNA ligase family. LigA subfamily. Mg(2+) serves as cofactor. The cofactor is Mn(2+).

The enzyme catalyses NAD(+) + (deoxyribonucleotide)n-3'-hydroxyl + 5'-phospho-(deoxyribonucleotide)m = (deoxyribonucleotide)n+m + AMP + beta-nicotinamide D-nucleotide.. DNA ligase that catalyzes the formation of phosphodiester linkages between 5'-phosphoryl and 3'-hydroxyl groups in double-stranded DNA using NAD as a coenzyme and as the energy source for the reaction. It is essential for DNA replication and repair of damaged DNA. This Lawsonia intracellularis (strain PHE/MN1-00) protein is DNA ligase.